A 426-amino-acid chain; its full sequence is Ubiquitin carboxyl-terminal hydrolase 46 (426 aa).

A lipid anchor (N-myristoyl glycine) is attached at G2. The USP domain maps to 27–406; it reads YGLVNFGNTC…SAYILFYQAR (380 aa). C36 functions as the Nucleophile in the catalytic mechanism. Positions 162-181 are disordered; it reads TAGLPRSDEKGTSERNGGIT. Catalysis depends on H342, which acts as the Proton acceptor.

The protein belongs to the peptidase C19 family. As to quaternary structure, interacts with wdr-20 and wdr-48; the catalytic activity of usp-46 is increased in the presence of both wdr-20 and wdr-48. Interacts with glr-1; the interaction results in deubiquitination of glr-1. Expressed in a number of tissues including the nervous system, pharynx, body wall muscle, vulva muscle and intestine and is detected in many head and ventral cord neurons.

The protein localises to the perikaryon. The protein resides in the cytoplasm. The catalysed reaction is Thiol-dependent hydrolysis of ester, thioester, amide, peptide and isopeptide bonds formed by the C-terminal Gly of ubiquitin (a 76-residue protein attached to proteins as an intracellular targeting signal).. Regulates the abundance of the glr-1 glutamate receptor in the ventral nerve cord by promoting its deubiquitination and preventing its degradation in the lysosome. Contributes to the regulation of embryonic polarity. The chain is Ubiquitin carboxyl-terminal hydrolase 46 (usp-46) from Caenorhabditis elegans.